The primary structure comprises 581 residues: Fibrous sheath-interacting protein 1 (581 aa).

Residues 1-77 (MDIIKGNLDG…SNDDKRESCS (77 aa)) are disordered. Over residues 14-30 (PASNSRIRPGSRSSNAS) the composition is skewed to polar residues. Basic and acidic residues predominate over residues 52–77 (GKEDHSESSNTENRRTSNDDKRESCS). S87 carries the phosphoserine modification. Positions 103 to 153 (SDEHKLEELDSQLQDAIQKMKKLDKILAKTQRREKEIKKQGLEMRIKLWEE) form a coiled coil. Disordered regions lie at residues 338 to 370 (SSFS…KVLR) and 553 to 581 (DQHL…CKEP).

It belongs to the FSIP1 family.

This Macaca fascicularis (Crab-eating macaque) protein is Fibrous sheath-interacting protein 1 (FSIP1).